The chain runs to 379 residues: Lipid-A-disaccharide synthase (379 aa).

The protein belongs to the LpxB family.

It carries out the reaction a lipid X + a UDP-2-N,3-O-bis[(3R)-3-hydroxyacyl]-alpha-D-glucosamine = a lipid A disaccharide + UDP + H(+). It participates in bacterial outer membrane biogenesis; LPS lipid A biosynthesis. Its function is as follows. Condensation of UDP-2,3-diacylglucosamine and 2,3-diacylglucosamine-1-phosphate to form lipid A disaccharide, a precursor of lipid A, a phosphorylated glycolipid that anchors the lipopolysaccharide to the outer membrane of the cell. In Vibrio cholerae serotype O1 (strain ATCC 39541 / Classical Ogawa 395 / O395), this protein is Lipid-A-disaccharide synthase.